The sequence spans 444 residues: UDP-N-acetylmuramate--L-alanine ligase (444 aa).

110–116 (GAHGKTS) lines the ATP pocket.

The protein belongs to the MurCDEF family.

The protein resides in the cytoplasm. It catalyses the reaction UDP-N-acetyl-alpha-D-muramate + L-alanine + ATP = UDP-N-acetyl-alpha-D-muramoyl-L-alanine + ADP + phosphate + H(+). The protein operates within cell wall biogenesis; peptidoglycan biosynthesis. Cell wall formation. The sequence is that of UDP-N-acetylmuramate--L-alanine ligase from Streptococcus sanguinis (strain SK36).